Here is a 258-residue protein sequence, read N- to C-terminus: MTWNPDQYHQFKDARSAPARDLQALIPERPYAQVVDLGCGTGEQTAQLAQRFPQATVLGLDSSAAMLAKAGAQQLPNLRFEQGDIQELSGSFDLLYSNAALQWLPDHPRLLARLWEHLRPGGVLAVQVPANHDHASHRLLTATANEFETELGGFTRFGTAHGASPVLTPAAYAELLDGLGAVDITALSKVYPVVLPGAEGLIEWTKGTALVPYLSRLDGADAARFLDVYRGKLQAEFPGERVYYAFTRVLFVATRPEL.

This sequence belongs to the methyltransferase superfamily. Tam family.

The protein localises to the cytoplasm. The enzyme catalyses trans-aconitate + S-adenosyl-L-methionine = (E)-3-(methoxycarbonyl)pent-2-enedioate + S-adenosyl-L-homocysteine. In terms of biological role, catalyzes the S-adenosylmethionine monomethyl esterification of trans-aconitate. The protein is Trans-aconitate 2-methyltransferase of Deinococcus radiodurans (strain ATCC 13939 / DSM 20539 / JCM 16871 / CCUG 27074 / LMG 4051 / NBRC 15346 / NCIMB 9279 / VKM B-1422 / R1).